The primary structure comprises 87 residues: Small ribosomal subunit protein uS15c (87 aa).

The protein belongs to the universal ribosomal protein uS15 family. Part of the 30S ribosomal subunit.

It localises to the plastid. The protein localises to the chloroplast. The protein is Small ribosomal subunit protein uS15c (rps15) of Solanum bulbocastanum (Wild potato).